Here is a 580-residue protein sequence, read N- to C-terminus: Adenine deaminase 2 (580 aa).

It belongs to the metallo-dependent hydrolases superfamily. Adenine deaminase family. Mn(2+) serves as cofactor.

The catalysed reaction is adenine + H2O + H(+) = hypoxanthine + NH4(+). This Latilactobacillus sakei subsp. sakei (strain 23K) (Lactobacillus sakei subsp. sakei) protein is Adenine deaminase 2.